The following is a 462-amino-acid chain: MSLRFSGGSRHVGIQSGSLRPPSGGAGFAGSSVAGGSVAGSGFSWALGGTLGSAPGGSHATGALGNVSGVCFIGSEGGLLSGNEKVTMQNLNNRLASYLDNVKALEEANSELERKIKTWHEKYGPGSCRGLDRDYSKYHLTIEDLKSKIISSTAANANIILQIDNARLAADDFRLKYENELTLHQNVEADINGLRRVLDELTLCRTDQELQYESLSEEMTYLKKNHEEEMKVLQCAAGGNVNVEMNAAPGVDLTVLLNNMRAEYEALAEQNRRDAEAWFQEKSATLQQQISNDLGAATSARTELTELKRSLQTLEIELQSLSATKHSLECSLAETEGNYCSQLAQIQAQISALEEQLHQVRTETEGQKLEHEQLLDIKAHLEKEIETYCRLIDGDENSCSVSKGFESGTSGNSPKDVSKTTLVKTVVEEIDQRGKVLSSRIHSIEEKMSKMSNGKAEQRVPF.

A disordered region spans residues 1 to 26; it reads MSLRFSGGSRHVGIQSGSLRPPSGGA. The segment at 1–83 is head; that stretch reads MSLRFSGGSR…GSEGGLLSGN (83 aa). The coil 1A stretch occupies residues 84 to 119; sequence EKVTMQNLNNRLASYLDNVKALEEANSELERKIKTW. The IF rod domain occupies 84–399; it reads EKVTMQNLNN…RLIDGDENSC (316 aa). The tract at residues 120–141 is linker 1; that stretch reads HEKYGPGSCRGLDRDYSKYHLT. Residues 142–233 form a coil 1B region; it reads IEDLKSKIIS…KNHEEEMKVL (92 aa). A linker 12 region spans residues 234–256; that stretch reads QCAAGGNVNVEMNAAPGVDLTVL. The tract at residues 257 to 395 is coil 2; that stretch reads LNNMRAEYEA…ETYCRLIDGD (139 aa). Positions 396 to 462 are tail; it reads ENSCSVSKGF…NGKAEQRVPF (67 aa).

It belongs to the intermediate filament family. In terms of assembly, heterotetramer of two type I and two type II keratins. As to expression, in the hair follicle and bulb, uniformly expressed in all three layers of the inner root sheath (the Henle layer, the Huxley layer and the cuticle) and observed in matrix cells (at protein level).

The protein localises to the cytoplasm. Its function is as follows. Essential for the proper assembly of types I and II keratin protein complexes and the formation of keratin intermediate filaments in the inner root sheath (irs). In Mus musculus (Mouse), this protein is Keratin, type I cytoskeletal 28.